The primary structure comprises 471 residues: MSDAPVSSSAANAMWGGRFAAGPDAIMQAINASIGFDKRLYAQDIRGSRAHAAMLAAQGILSSRDAEAIGEGLLTVLSEIEAGGFPFRVGLEDIHMNVEARLKELIGEPAGRLHTARSRNDQVAVDFRLWVRDQCDAAITGIEALMQAFVAQAEAGADWVMPGFTHLQTAQPVTWGHHMLAYVEMLARDRSRFADARARMNECPLGAAALAGTGFPIDRHMTAAALGFDRPTANSLDSVSDRDFALEFLSASAICALHLSRFAEELVIWSSAQFRFVRLSDRWTTGSSIMPQKKNPDAAELLRAKLGRVLGAAVALFTVMKGLPLTYSKDMQEDKEQVFDAADTLMLGLAAMTGMVADMQANRESLAAAAASGFSTATDLADWLVRELDLPFRDAHHVTGTLVARAEARGCDLPDLTLAEMQEVHPGIREDVFAVLGVANSVRSRTSYGGTAPDNVRAQAARWKELLGGTA.

This sequence belongs to the lyase 1 family. Argininosuccinate lyase subfamily.

The protein resides in the cytoplasm. It carries out the reaction 2-(N(omega)-L-arginino)succinate = fumarate + L-arginine. It participates in amino-acid biosynthesis; L-arginine biosynthesis; L-arginine from L-ornithine and carbamoyl phosphate: step 3/3. In Cereibacter sphaeroides (strain ATCC 17025 / ATH 2.4.3) (Rhodobacter sphaeroides), this protein is Argininosuccinate lyase.